Here is a 134-residue protein sequence, read N- to C-terminus: Ribonuclease VapC1 (134 aa).

The PINc domain occupies 3 to 132; the sequence is YMLDTNIIIY…RITDLQWQDW (130 aa). The Mg(2+) site is built by Asp-6 and Asp-99.

Belongs to the PINc/VapC protein family. In terms of assembly, forms a complex with VapB1. It depends on Mg(2+) as a cofactor.

Toxic component of a type II toxin-antitoxin (TA) system. Upon expression in E.coli inhibits growth in liquid culture. Its toxic effect is neutralized by coexpression with antitoxin VapB1. Degrades RNA but not ss- or ds-DNA in vitro, degradation is inhibited by VapB1 antitoxin. The polypeptide is Ribonuclease VapC1 (Haemophilus influenzae (strain R2866)).